A 521-amino-acid chain; its full sequence is Manganese transporter pdt1 (521 aa).

Residue Ser-42 is modified to Phosphoserine. Phosphothreonine is present on Thr-43. 12 consecutive transmembrane segments (helical) span residues 71–91, 104–124, 152–172, 179–199, 210–230, 233–253, 260–280, 325–345, 373–393, 417–437, 440–460, and 495–515; these read YCKF…PGNY, KLLF…SLCI, VLAE…TAVA, IPLV…LIAW, IFET…AVVL, VHIG…TVFS, SIGI…SGLV, LFTF…AVFY, LFAV…TIAG, IAII…LNQV, ASQV…VMFT, and IVTW…IVWL.

This sequence belongs to the NRAMP family.

It localises to the endoplasmic reticulum membrane. In terms of biological role, transports manganese ions into the cell. Regulates cell morphogenesis through control of manganese homeostasis. This is Manganese transporter pdt1 (pdt1) from Schizosaccharomyces pombe (strain 972 / ATCC 24843) (Fission yeast).